Here is a 342-residue protein sequence, read N- to C-terminus: Trans-3-hydroxy-L-proline dehydratase (342 aa).

The active-site Proton acceptor is the Ser-90. Residues 91-92 (GS), Asp-252, and 257-258 (GT) each bind substrate.

This sequence belongs to the proline racemase family.

It catalyses the reaction trans-3-hydroxy-L-proline = 1-pyrroline-2-carboxylate + H2O. In terms of biological role, catalyzes the dehydration of trans-3-hydroxy-L-proline (t3LHyp) to Delta(1)-pyrroline-2-carboxylate (Pyr2C). Can also catalyze the epimerization of trans-4-hydroxy-L-proline (t4LHyp) to cis-4-hydroxy-D-proline (c4DHyp), albeit with 150-fold lower efficiency. May be involved in the degradation pathway that converts t3LHyp to L-proline, which would allow R.meliloti to grow on t3LHyp as a sole carbon source. Displays no proline racemase activity. This Rhizobium meliloti (strain 1021) (Ensifer meliloti) protein is Trans-3-hydroxy-L-proline dehydratase.